A 741-amino-acid chain; its full sequence is MEHTYQYAWVIPLLPLPVILSMGFGLFLIPIATKNFRRIWAFPSVLLLSIAMVFSVQLSIQQINGSSIYQYLWSWTINNDFSLEFGYLIDPLTSIMLMLITTVGILVLIYSDGYMSHDEGYLRFFIYISFFNISMLGLVTSSNLIQIYFFWELVGMCSYLLIGFWFTRPIAASACQKAFVTNRIGDFGLLLGILGFFWITGSLEFRDLFQTANNWIPNNGTTSLLTTLCAFLLFLGAVAKSAQFPLHVWLPDAMEGPTPISALIHAATMVAAGIFLLARLLPLFISLPLIMTFISLVGTITLFLGATLALAQRDIKRTLAYSTMSQLGYMMLALGIGSYQAALFHLITHAYSKALLFLGSGSIIHSMEPLVGYSPDKSQNMALMGGLRKYIPITRTAFLWGTLSICGIPPLACFWSKDEILSNSWLYSPFFGIIASFTAGLTAFYMFRIYLLTFDGYFRFHFQNYSSTKEGSLYSISLWGNRIPKGVSKDFVLSTTKSEVYFFSQNISISKGQGNTRNRIESFSTSFGSKNVFTYPHETGNTMLFPLLILLLFTFFIGFIGIPFDNETMDNGIAGVTILSKWLIPSINFTQESSNSSINSYEFITNAISSVSLVILGLFIAYIFYGSAYSFFQNLDLQNSFYKGSPKKNFFYQVKKKIYSWSYNRGYIDIFYSRLFTLGIRGLTELTEFFDKGVIDGITNGVGLASFCIGEEIKYVGGGRISSYLFFFLCYVSVFLFFFLS.

A run of 16 helical transmembrane segments spans residues 9 to 29 (WVIP…LFLI), 39 to 59 (IWAF…VQLS), 89 to 109 (IDPL…LVLI), 125 to 145 (FIYI…SNLI), 147 to 167 (IYFF…FWFT), 184 to 204 (IGDF…GSLE), 216 to 238 (IPNN…LGAV), 258 to 278 (TPIS…FLLA), 280 to 300 (LLPL…VGTI), 327 to 347 (LGYM…FHLI), 354 to 374 (ALLF…VGYS), 396 to 416 (TAFL…CFWS), 425 to 445 (WLYS…TAFY), 544 to 564 (LFPL…GIPF), 612 to 632 (SLVI…YSFF), and 721 to 741 (ISSY…FFLS).

The protein belongs to the complex I subunit 5 family. As to quaternary structure, NDH is composed of at least 16 different subunits, 5 of which are encoded in the nucleus.

The protein resides in the plastid. It is found in the chloroplast thylakoid membrane. The enzyme catalyses a plastoquinone + NADH + (n+1) H(+)(in) = a plastoquinol + NAD(+) + n H(+)(out). The catalysed reaction is a plastoquinone + NADPH + (n+1) H(+)(in) = a plastoquinol + NADP(+) + n H(+)(out). In terms of biological role, NDH shuttles electrons from NAD(P)H:plastoquinone, via FMN and iron-sulfur (Fe-S) centers, to quinones in the photosynthetic chain and possibly in a chloroplast respiratory chain. The immediate electron acceptor for the enzyme in this species is believed to be plastoquinone. Couples the redox reaction to proton translocation, and thus conserves the redox energy in a proton gradient. The chain is NAD(P)H-quinone oxidoreductase subunit 5, chloroplastic (ndhF) from Brachypodium distachyon (Purple false brome).